The following is an 898-amino-acid chain: Probable LRR receptor-like serine/threonine-protein kinase At4g20450 (898 aa).

An N-terminal signal peptide occupies residues 1–24 (MEGIHKLIFLALIWIFLITNIVDA). At 25-535 (QDQQGFISLD…TGPGNNKKKL (511 aa)) the chain is on the extracellular side. Residues asparagine 40, asparagine 52, asparagine 98, asparagine 247, asparagine 253, asparagine 420, asparagine 443, asparagine 465, asparagine 484, and asparagine 489 are each glycosylated (N-linked (GlcNAc...) asparagine). LRR repeat units follow at residues 455–477 (QLQK…LAKM), 479–501 (LLTF…LLNM), and 505–526 (GLIT…ESET). Residues 536–556 (LVPILASAASVGIIIAVLLLV) traverse the membrane as a helical segment. The Cytoplasmic portion of the chain corresponds to 557 to 898 (NILLLRKKKP…FGPEHIPDAR (342 aa)). A Phosphothreonine modification is found at threonine 582. One can recognise a Protein kinase domain in the interval 591-864 (NNFERPLGEG…QVANELQECL (274 aa)). Residues 597-605 (LGEGGFGVV) and lysine 619 each bind ATP. A Phosphotyrosine modification is found at tyrosine 664. Aspartate 716 acts as the Proton acceptor in catalysis. The residue at position 750 (serine 750) is a Phosphoserine. The residue at position 751 (threonine 751) is a Phosphothreonine. Tyrosine 764 is subject to Phosphotyrosine. The interval 864–898 (LLTENSRKGGRHDVDSKSSLEQSTSFGPEHIPDAR) is disordered. A compositionally biased stretch (basic and acidic residues) spans 868–881 (NSRKGGRHDVDSKS).

This sequence belongs to the protein kinase superfamily. Ser/Thr protein kinase family.

It is found in the membrane. It catalyses the reaction L-seryl-[protein] + ATP = O-phospho-L-seryl-[protein] + ADP + H(+). The catalysed reaction is L-threonyl-[protein] + ATP = O-phospho-L-threonyl-[protein] + ADP + H(+). The sequence is that of Probable LRR receptor-like serine/threonine-protein kinase At4g20450 from Arabidopsis thaliana (Mouse-ear cress).